We begin with the raw amino-acid sequence, 422 residues long: UPF0761 membrane protein XAC0937 (422 aa).

A run of 6 helical transmembrane segments spans residues 45-65, 102-122, 151-171, 179-199, 213-233, and 247-267; these read VFALVPLAIVVFGVLSAFPAF, FTVAGMVALVASLLITLHSIE, GTMLAAASMAMAAYVFALPLF, LAEFAWRLAPMAVEFVCIVLI, ALPGALLAVILMEIVKWGFGF, and ALSALPILLLWIYLSWVSVLL.

Belongs to the UPF0761 family.

The protein resides in the cell inner membrane. This chain is UPF0761 membrane protein XAC0937, found in Xanthomonas axonopodis pv. citri (strain 306).